A 342-amino-acid chain; its full sequence is uncharacterized protein (342 aa).

Arginine 69 lines the substrate pocket. The active-site Proton donor is the histidine 176. Aspartate 240 is a binding site for substrate.

Belongs to the aldose epimerase family.

This is an uncharacterized protein from Saccharomyces cerevisiae (strain ATCC 204508 / S288c) (Baker's yeast).